A 37-amino-acid chain; its full sequence is Large ribosomal subunit protein bL36 (37 aa).

The protein belongs to the bacterial ribosomal protein bL36 family.

In Marinobacter nauticus (strain ATCC 700491 / DSM 11845 / VT8) (Marinobacter aquaeolei), this protein is Large ribosomal subunit protein bL36.